The chain runs to 327 residues: 2-keto-3-deoxygluconate permease (327 aa).

Transmembrane regions (helical) follow at residues 10–30 (IPGG…TFSP), 42–62 (GMIT…GASI), 73–93 (KSGT…AIAS), 95–115 (IIPE…LALV), 139–159 (AGAF…IILG), 163–183 (IASF…VGFA), 199–219 (VQTL…LTVI), 224–244 (LLGI…LIIA), 254–274 (TAGI…VLIA), and 289–309 (SLVA…TSIW).

The protein belongs to the KdgT transporter family.

Its subcellular location is the cell inner membrane. It carries out the reaction 2-dehydro-3-deoxy-D-gluconate(in) + H(+)(in) = 2-dehydro-3-deoxy-D-gluconate(out) + H(+)(out). Catalyzes the proton-dependent uptake of 2-keto-3-deoxygluconate (KDG) into the cell. This Escherichia coli O7:K1 (strain IAI39 / ExPEC) protein is 2-keto-3-deoxygluconate permease.